Consider the following 279-residue polypeptide: Acetyl-coenzyme A carboxylase carboxyl transferase subunit beta (279 aa).

In terms of domain architecture, CoA carboxyltransferase N-terminal spans 23–279; it reads LWWKCEECGA…IVRLAGMLKV (257 aa). Cys-27, Cys-30, Cys-46, and Cys-49 together coordinate Zn(2+). Residues 27 to 49 form a C4-type zinc finger; it reads CEECGAMIHKKQLEDHVYTCSDC.

This sequence belongs to the AccD/PCCB family. Acetyl-CoA carboxylase is a heterohexamer composed of biotin carboxyl carrier protein (AccB), biotin carboxylase (AccC) and two subunits each of ACCase subunit alpha (AccA) and ACCase subunit beta (AccD). Zn(2+) serves as cofactor.

It localises to the cytoplasm. The catalysed reaction is N(6)-carboxybiotinyl-L-lysyl-[protein] + acetyl-CoA = N(6)-biotinyl-L-lysyl-[protein] + malonyl-CoA. Its pathway is lipid metabolism; malonyl-CoA biosynthesis; malonyl-CoA from acetyl-CoA: step 1/1. Functionally, component of the acetyl coenzyme A carboxylase (ACC) complex. Biotin carboxylase (BC) catalyzes the carboxylation of biotin on its carrier protein (BCCP) and then the CO(2) group is transferred by the transcarboxylase to acetyl-CoA to form malonyl-CoA. This Chlorobium limicola (strain DSM 245 / NBRC 103803 / 6330) protein is Acetyl-coenzyme A carboxylase carboxyl transferase subunit beta.